The sequence spans 216 residues: Large ribosomal subunit protein uL3 (216 aa).

The disordered stretch occupies residues 132-157 (FRGQGASHGTQAVHRKPGSIGGCATP).

It belongs to the universal ribosomal protein uL3 family. In terms of assembly, part of the 50S ribosomal subunit. Forms a cluster with proteins L14 and L19.

Functionally, one of the primary rRNA binding proteins, it binds directly near the 3'-end of the 23S rRNA, where it nucleates assembly of the 50S subunit. In Saccharopolyspora erythraea (strain ATCC 11635 / DSM 40517 / JCM 4748 / NBRC 13426 / NCIMB 8594 / NRRL 2338), this protein is Large ribosomal subunit protein uL3.